The primary structure comprises 117 residues: Structural toxin peptide sea anemone type 9a (117 aa).

Positions 1–23 (MKTIIAIFSLAAMIVLVRPTPLE) are cleaved as a signal peptide. Tandem repeats lie at residues 28–56 (TRSI…GCQE), 57–88 (KRNI…NEAV), and 89–117 (KRAI…HGCS). A 3 X approximate tandem repeats region spans residues 29 to 117 (RSIINVPCKK…GKCRKIHGCS (89 aa)).

Contains 6 disulfide bonds. Expressed outside of acontia.

It is found in the secreted. It localises to the nematocyst. In terms of biological role, putative neurotoxin. This is Structural toxin peptide sea anemone type 9a from Calliactis polypus (Hermit crab anemone).